The sequence spans 621 residues: MCSGWSSSVIWRHTQFAVERCGFCGSSGPGAPLEPSTLGSKHLPWEAVSAGFADRNRNMDGAMWLSLCPDNEDLLWRKKHKLLQARGKGDLALQRRADAKLWKNYQLQRLAEELRRGYQEAQHLHVGGLDRLQSARLLGWGGGRARENEPDSQGPIQRRSARPPRAKEKHRAALSEERSCREELGQQHPRHSRPRKTAASPEKPQTTKATGRMNSHLAPPEKRKGRPEPSTKSGGGRCAIHPRRSKGADLERSNPLVAAVGEIGLVEEKEKGTARAGRRQLGKGAVCFVPALTSRSQGQSLEGKLRDLGQLWPADSSCRREAVSPASQCTLREKNKWQKELELAFEELFNINRKLKKHLCLYLALKPRMDQRPGEGHAFSEMQECGAGTPRGKKMADPEMLPAGEPRSPAEEEAQQAASKTDLKTFMGKAQNQKYQGTVKPTFRNGSQTLSPEAGIFINKEDSLLYSTESGQETPKLGTLAEGSLQLHLQDQADRVGSTASRQRQKAEMEQRRQKQLESLEQMEHPDMSLEIHYKAELEKERREQRRARLAHLKSSSTRAQERERGSELSTTSPSGTSLADDDRHSQMIRDQQQQILQQNRLHKQFLEEARKCLREFQNIC.

The disordered stretch occupies residues 142-253 (GGRARENEPD…RSKGADLERS (112 aa)). Over residues 159 to 170 (RSARPPRAKEKH) the composition is skewed to basic residues. A compositionally biased stretch (basic and acidic residues) spans 171-185 (RAALSEERSCREELG). Residues 203 to 213 (KPQTTKATGRM) show a composition bias toward polar residues. A compositionally biased stretch (basic and acidic residues) spans 219-229 (PPEKRKGRPEP). Residues 328–359 (QCTLREKNKWQKELELAFEELFNINRKLKKHL) are a coiled coil. 3 disordered regions span residues 385-421 (CGAG…ASKT), 491-529 (DQAD…PDMS), and 543-586 (REQR…DRHS). Positions 498–525 (STASRQRQKAEMEQRRQKQLESLEQMEH) form a coiled coil. The segment covering 505-529 (QKAEMEQRRQKQLESLEQMEHPDMS) has biased composition (basic and acidic residues). Residues 568-578 (ELSTTSPSGTS) are compositionally biased toward polar residues.

Its subcellular location is the cell projection. The protein localises to the cilium. This is CEP295 N-terminal-like protein from Homo sapiens (Human).